The chain runs to 504 residues: Probable cytosol aminopeptidase (504 aa).

Residues lysine 274 and aspartate 279 each coordinate Mn(2+). Residue lysine 286 is part of the active site. The Mn(2+) site is built by aspartate 297, aspartate 356, and glutamate 358. Arginine 360 is an active-site residue.

Belongs to the peptidase M17 family. The cofactor is Mn(2+).

It is found in the cytoplasm. It catalyses the reaction Release of an N-terminal amino acid, Xaa-|-Yaa-, in which Xaa is preferably Leu, but may be other amino acids including Pro although not Arg or Lys, and Yaa may be Pro. Amino acid amides and methyl esters are also readily hydrolyzed, but rates on arylamides are exceedingly low.. The catalysed reaction is Release of an N-terminal amino acid, preferentially leucine, but not glutamic or aspartic acids.. Presumably involved in the processing and regular turnover of intracellular proteins. Catalyzes the removal of unsubstituted N-terminal amino acids from various peptides. In Gloeobacter violaceus (strain ATCC 29082 / PCC 7421), this protein is Probable cytosol aminopeptidase.